A 705-amino-acid polypeptide reads, in one-letter code: Pentatricopeptide repeat-containing protein At1g09410, mitochondrial (705 aa).

A mitochondrion-targeting transit peptide spans M1–Y11. 15 PPR repeats span residues P16–K46, S47–R77, N78–S112, W113–K139, N140–K170, D171–T205, W206–K232, T233–A267, C268–R294, N295–P329, T330–V364, D365–K395, D396–K430, N432–V462, and I468–E498. Residues V503–E578 are type E motif. The tract at residues N579 to R610 is type E(+) motif. Residues E611–W705 are type DYW motif.

Belongs to the PPR family. PCMP-H subfamily.

It is found in the mitochondrion. The chain is Pentatricopeptide repeat-containing protein At1g09410, mitochondrial (PCMP-H18) from Arabidopsis thaliana (Mouse-ear cress).